We begin with the raw amino-acid sequence, 335 residues long: tRNA N6-adenosine threonylcarbamoyltransferase (335 aa).

Fe cation-binding residues include His-110 and His-114. Substrate contacts are provided by residues 132 to 136 (LVSGG), Asp-165, Gly-178, and Asn-271. Residue Asp-299 coordinates Fe cation.

The protein belongs to the KAE1 / TsaD family. Fe(2+) serves as cofactor.

It is found in the cytoplasm. It catalyses the reaction L-threonylcarbamoyladenylate + adenosine(37) in tRNA = N(6)-L-threonylcarbamoyladenosine(37) in tRNA + AMP + H(+). Its function is as follows. Required for the formation of a threonylcarbamoyl group on adenosine at position 37 (t(6)A37) in tRNAs that read codons beginning with adenine. Is involved in the transfer of the threonylcarbamoyl moiety of threonylcarbamoyl-AMP (TC-AMP) to the N6 group of A37, together with TsaE and TsaB. TsaD likely plays a direct catalytic role in this reaction. The sequence is that of tRNA N6-adenosine threonylcarbamoyltransferase from Campylobacter jejuni subsp. jejuni serotype O:23/36 (strain 81-176).